Reading from the N-terminus, the 85-residue chain is Putative membrane protein insertion efficiency factor (85 aa).

This sequence belongs to the UPF0161 family.

The protein resides in the cell inner membrane. Could be involved in insertion of integral membrane proteins into the membrane. The protein is Putative membrane protein insertion efficiency factor of Dictyoglomus thermophilum (strain ATCC 35947 / DSM 3960 / H-6-12).